Consider the following 391-residue polypeptide: MEKAIRNFLSQESAGGILLLVAVVFAMLMANSPLSGLYQGFLGTDVQVRVGALDIHKPLLLWINDGLMALFFLLIGLEVKRELLEGALSSVAQASLPSFAAIGGMLVPAGIYLLFNYGDPVTQAGWAIPAATDIAFALGIMALLGNRVPVALKVFLLALAIIDDLGVIVIIALFYSSDLSTISLAIASVAILGLVGLNRKGITALTPYGILGLILWVAVLKSGVHATLAGVIIAFCIPLRAKDGSSPSEHLEHSLHPWSNFLILPVFAFANAGVALGNMSLDTLLSPVPIGIALGLILGKPIGVMLFSFIAVKLKLARLPDNVGWMQIAPVAAMCGIGFTMSMFIASLAFEQADPMYGDLARLGTLIGSFIAALVGYFWLSKVLPKKGVLL.

The next 11 membrane-spanning stretches (helical) occupy residues 14–34 (AGGILLLVAVVFAMLMANSPL), 59–79 (LLLWINDGLMALFFLLIGLEV), 95–115 (SLPSFAAIGGMLVPAGIYLLF), 124–144 (AGWAIPAATDIAFALGIMALL), 154–174 (VFLLALAIIDDLGVIVIIALF), 177–197 (SDLSTISLAIASVAILGLVGL), 213–233 (LILWVAVLKSGVHATLAGVII), 261–281 (FLILPVFAFANAGVALGNMSL), 290–310 (IGIALGLILGKPIGVMLFSFI), 328–348 (IAPVAAMCGIGFTMSMFIASL), and 363–383 (LGTLIGSFIAALVGYFWLSKV).

Belongs to the NhaA Na(+)/H(+) (TC 2.A.33) antiporter family.

Its subcellular location is the cell inner membrane. It carries out the reaction Na(+)(in) + 2 H(+)(out) = Na(+)(out) + 2 H(+)(in). Its function is as follows. Na(+)/H(+) antiporter that extrudes sodium in exchange for external protons. The chain is Na(+)/H(+) antiporter NhaA from Shewanella putrefaciens (strain CN-32 / ATCC BAA-453).